The primary structure comprises 429 residues: Enolase (429 aa).

Glutamine 162 contacts (2R)-2-phosphoglycerate. Glutamate 204 (proton donor) is an active-site residue. Mg(2+) contacts are provided by aspartate 241, glutamate 283, and aspartate 310. 4 residues coordinate (2R)-2-phosphoglycerate: lysine 335, arginine 364, serine 365, and lysine 386. Lysine 335 acts as the Proton acceptor in catalysis.

This sequence belongs to the enolase family. Mg(2+) is required as a cofactor.

The protein resides in the cytoplasm. The protein localises to the secreted. It is found in the cell surface. The enzyme catalyses (2R)-2-phosphoglycerate = phosphoenolpyruvate + H2O. It participates in carbohydrate degradation; glycolysis; pyruvate from D-glyceraldehyde 3-phosphate: step 4/5. Its function is as follows. Catalyzes the reversible conversion of 2-phosphoglycerate (2-PG) into phosphoenolpyruvate (PEP). It is essential for the degradation of carbohydrates via glycolysis. This chain is Enolase, found in Mycobacterium avium (strain 104).